We begin with the raw amino-acid sequence, 203 residues long: dITP/XTP pyrophosphatase (203 aa).

9 to 14 contacts substrate; that stretch reads SSNAGK. 2 residues coordinate Mg(2+): Glu42 and Asp72. Asp72 serves as the catalytic Proton acceptor. Substrate is bound by residues Ser73, 161–164, Lys184, and 189–190; these read FGYD and HR.

It belongs to the HAM1 NTPase family. In terms of assembly, homodimer. The cofactor is Mg(2+).

The enzyme catalyses XTP + H2O = XMP + diphosphate + H(+). The catalysed reaction is dITP + H2O = dIMP + diphosphate + H(+). It catalyses the reaction ITP + H2O = IMP + diphosphate + H(+). In terms of biological role, pyrophosphatase that catalyzes the hydrolysis of nucleoside triphosphates to their monophosphate derivatives, with a high preference for the non-canonical purine nucleotides XTP (xanthosine triphosphate), dITP (deoxyinosine triphosphate) and ITP. Seems to function as a house-cleaning enzyme that removes non-canonical purine nucleotides from the nucleotide pool, thus preventing their incorporation into DNA/RNA and avoiding chromosomal lesions. This Acidobacterium capsulatum (strain ATCC 51196 / DSM 11244 / BCRC 80197 / JCM 7670 / NBRC 15755 / NCIMB 13165 / 161) protein is dITP/XTP pyrophosphatase.